The chain runs to 244 residues: Octanoyltransferase (244 aa).

Positions 49-237 (VAPGNFLIFC…HLTALFELHI (189 aa)) constitute a BPL/LPL catalytic domain. Residues 94–101 (RGGDITYH), 167–169 (AMG), and 180–182 (GFA) contribute to the substrate site. The active-site Acyl-thioester intermediate is the cysteine 198.

This sequence belongs to the LipB family.

The protein resides in the cytoplasm. It carries out the reaction octanoyl-[ACP] + L-lysyl-[protein] = N(6)-octanoyl-L-lysyl-[protein] + holo-[ACP] + H(+). The protein operates within protein modification; protein lipoylation via endogenous pathway; protein N(6)-(lipoyl)lysine from octanoyl-[acyl-carrier-protein]: step 1/2. In terms of biological role, catalyzes the transfer of endogenously produced octanoic acid from octanoyl-acyl-carrier-protein onto the lipoyl domains of lipoate-dependent enzymes. Lipoyl-ACP can also act as a substrate although octanoyl-ACP is likely to be the physiological substrate. In Cytophaga hutchinsonii (strain ATCC 33406 / DSM 1761 / CIP 103989 / NBRC 15051 / NCIMB 9469 / D465), this protein is Octanoyltransferase.